A 159-amino-acid polypeptide reads, in one-letter code: Histone H1 (159 aa).

3 disordered regions span residues 1-31 (MAEK…ITEL), 80-99 (KGAE…KKEK), and 132-159 (AAKK…KKKS). The span at 10-22 (VTTKKPAATHRRR) shows a compositional bias: basic residues. One can recognise an H15 domain in the interval 12-102 (TKKPAATHRR…GEGKKEKEKA (91 aa)). The segment covering 84 to 93 (CAGGQGTGVG) has biased composition (gly residues). Over residues 134-148 (KKVKAAPKKAKKPVK) the composition is skewed to basic residues. The span at 149–159 (KTTEKKEKKKS) shows a compositional bias: basic and acidic residues.

This sequence belongs to the histone H1/H5 family.

The protein localises to the nucleus. The protein resides in the chromosome. Histones H1 are necessary for the condensation of nucleosome chains into higher-order structures. The polypeptide is Histone H1 (Psammechinus miliaris (Green sea urchin)).